Here is a 244-residue protein sequence, read N- to C-terminus: Small ribosomal subunit protein eS4 (244 aa).

Positions 43-106 constitute an S4 RNA-binding domain; it reads LPLLLVVRDV…DENYLVLFDE (64 aa).

The protein belongs to the eukaryotic ribosomal protein eS4 family.

The protein is Small ribosomal subunit protein eS4 of Methanococcus maripaludis (strain C5 / ATCC BAA-1333).